A 106-amino-acid chain; its full sequence is MIISTTSQLEGRPVAEYLGVVSAESVQGINFVRDFFARFRDFFGGRSQTLESALKEAREQATEELKARARQLQADAVVGVDFEISMPSVQGGMVVVFATGTAVRLK.

The protein belongs to the UPF0145 family.

This Pseudomonas entomophila (strain L48) protein is UPF0145 protein PSEEN3024.